Reading from the N-terminus, the 382-residue chain is Mannitol-1-phosphate 5-dehydrogenase (382 aa).

3 to 14 is an NAD(+) binding site; sequence ALHFGAGNIGRG.

Belongs to the mannitol dehydrogenase family.

It catalyses the reaction D-mannitol 1-phosphate + NAD(+) = beta-D-fructose 6-phosphate + NADH + H(+). This is Mannitol-1-phosphate 5-dehydrogenase from Salmonella dublin (strain CT_02021853).